Here is a 521-residue protein sequence, read N- to C-terminus: uncharacterized protein (521 aa).

The tract at residues methionine 1 to lysine 25 is disordered. 6 consecutive transmembrane segments (helical) span residues glycine 68 to leucine 88, valine 114 to valine 134, valine 160 to glycine 180, valine 192 to leucine 212, alanine 290 to tryptophan 310, and leucine 399 to isoleucine 419.

Its subcellular location is the cell membrane. This is an uncharacterized protein from Mycobacterium tuberculosis (strain CDC 1551 / Oshkosh).